Reading from the N-terminus, the 301-residue chain is Protease HtpX homolog (301 aa).

2 helical membrane-spanning segments follow: residues 11–31 and 34–54; these read VLLL…IAGA and NSAF…YSYW. Residue His-138 participates in Zn(2+) binding. Glu-139 is an active-site residue. A Zn(2+)-binding site is contributed by His-142. Transmembrane regions (helical) follow at residues 154–174 and 188–208; these read AAAV…AAIF and LVGL…QLAI. Glu-213 lines the Zn(2+) pocket.

The protein belongs to the peptidase M48B family. Requires Zn(2+) as cofactor.

It localises to the cell membrane. The chain is Protease HtpX homolog from Kocuria rhizophila (strain ATCC 9341 / DSM 348 / NBRC 103217 / DC2201).